The following is an 835-amino-acid chain: Ribonucleoside-diphosphate reductase large subunit (835 aa).

Substrate is bound by residues S222, 237–238, G266, 447–451, and 660–664; these read SC, NLCCE, and PSASS. A disulfide bridge links C238 with C464. N447 (proton acceptor) is an active-site residue. The Cysteine radical intermediate role is filled by C449. E451 (proton acceptor) is an active-site residue.

It belongs to the ribonucleoside diphosphate reductase large chain family. Heterotetramer composed of a homodimer of the large subunit (R1) and a homodimer of the small subunit (R2). Larger multisubunit protein complex are also active, composed of (R1)n(R2)n.

The catalysed reaction is a 2'-deoxyribonucleoside 5'-diphosphate + [thioredoxin]-disulfide + H2O = a ribonucleoside 5'-diphosphate + [thioredoxin]-dithiol. Its function is as follows. Ribonucleoside-diphosphate reductase holoenzyme provides the precursors necessary for viral DNA synthesis. Allows virus growth in non-dividing cells. Catalyzes the biosynthesis of deoxyribonucleotides from the corresponding ribonucleotides. The polypeptide is Ribonucleoside-diphosphate reductase large subunit (Magallana gigas (Pacific oyster)).